The sequence spans 234 residues: Ubiquinone biosynthesis O-methyltransferase (234 aa).

Residues R40, G59, D80, and M123 each contribute to the S-adenosyl-L-methionine site.

The protein belongs to the methyltransferase superfamily. UbiG/COQ3 family.

The catalysed reaction is a 3-demethylubiquinol + S-adenosyl-L-methionine = a ubiquinol + S-adenosyl-L-homocysteine + H(+). It catalyses the reaction a 3-(all-trans-polyprenyl)benzene-1,2-diol + S-adenosyl-L-methionine = a 2-methoxy-6-(all-trans-polyprenyl)phenol + S-adenosyl-L-homocysteine + H(+). It participates in cofactor biosynthesis; ubiquinone biosynthesis. In terms of biological role, O-methyltransferase that catalyzes the 2 O-methylation steps in the ubiquinone biosynthetic pathway. The sequence is that of Ubiquinone biosynthesis O-methyltransferase from Coxiella burnetii (strain CbuG_Q212) (Coxiella burnetii (strain Q212)).